Reading from the N-terminus, the 95-residue chain is MAVKIRLTRMGSKKKPFYRINVADSRSPRDGRFIETVGTYNPLVAENQVTLKEDRVLAWLANGAQPSDTVRNILSKEGVLKKSTILNSQNKFKVG.

It belongs to the bacterial ribosomal protein bS16 family.

The protein is Small ribosomal subunit protein bS16 of Streptococcus pneumoniae (strain CGSP14).